The following is a 298-amino-acid chain: tRNA pseudouridine synthase B (298 aa).

D44 acts as the Nucleophile in catalysis.

Belongs to the pseudouridine synthase TruB family. Type 1 subfamily.

It catalyses the reaction uridine(55) in tRNA = pseudouridine(55) in tRNA. Its function is as follows. Responsible for synthesis of pseudouridine from uracil-55 in the psi GC loop of transfer RNAs. The sequence is that of tRNA pseudouridine synthase B from Mycobacteroides abscessus (strain ATCC 19977 / DSM 44196 / CCUG 20993 / CIP 104536 / JCM 13569 / NCTC 13031 / TMC 1543 / L948) (Mycobacterium abscessus).